The primary structure comprises 512 residues: Bifunctional purine biosynthesis protein PurH (512 aa).

An MGS-like domain is found at 1-144 (MKRALVSVSD…KNYHDVTIVV (144 aa)).

Belongs to the PurH family.

It carries out the reaction (6R)-10-formyltetrahydrofolate + 5-amino-1-(5-phospho-beta-D-ribosyl)imidazole-4-carboxamide = 5-formamido-1-(5-phospho-D-ribosyl)imidazole-4-carboxamide + (6S)-5,6,7,8-tetrahydrofolate. The enzyme catalyses IMP + H2O = 5-formamido-1-(5-phospho-D-ribosyl)imidazole-4-carboxamide. It participates in purine metabolism; IMP biosynthesis via de novo pathway; 5-formamido-1-(5-phospho-D-ribosyl)imidazole-4-carboxamide from 5-amino-1-(5-phospho-D-ribosyl)imidazole-4-carboxamide (10-formyl THF route): step 1/1. The protein operates within purine metabolism; IMP biosynthesis via de novo pathway; IMP from 5-formamido-1-(5-phospho-D-ribosyl)imidazole-4-carboxamide: step 1/1. The chain is Bifunctional purine biosynthesis protein PurH from Limosilactobacillus reuteri (strain DSM 20016) (Lactobacillus reuteri).